We begin with the raw amino-acid sequence, 353 residues long: Photosystem II D2 protein (353 aa).

An N-acetylthreonine modification is found at threonine 2. A Phosphothreonine modification is found at threonine 2. Residues cysteine 41 to threonine 61 form a helical membrane-spanning segment. Histidine 118 provides a ligand contact to chlorophyll a. Residues glycine 125 to proline 141 traverse the membrane as a helical segment. Pheophytin a-binding residues include glutamine 130 and asparagine 143. Residues valine 153–serine 166 form a helical membrane-spanning segment. Chlorophyll a is bound at residue histidine 198. A helical transmembrane segment spans residues alanine 208 to aspartate 228. A plastoquinone-binding residues include histidine 215 and phenylalanine 262. Histidine 215 is a Fe cation binding site. Histidine 269 contacts Fe cation. A helical transmembrane segment spans residues glycine 279–arginine 295.

The protein belongs to the reaction center PufL/M/PsbA/D family. As to quaternary structure, PSII is composed of 1 copy each of membrane proteins PsbA, PsbB, PsbC, PsbD, PsbE, PsbF, PsbH, PsbI, PsbJ, PsbK, PsbL, PsbM, PsbT, PsbX, PsbY, PsbZ, Psb30/Ycf12, at least 3 peripheral proteins of the oxygen-evolving complex and a large number of cofactors. It forms dimeric complexes. The cofactor is The D1/D2 heterodimer binds P680, chlorophylls that are the primary electron donor of PSII, and subsequent electron acceptors. It shares a non-heme iron and each subunit binds pheophytin, quinone, additional chlorophylls, carotenoids and lipids. There is also a Cl(-1) ion associated with D1 and D2, which is required for oxygen evolution. The PSII complex binds additional chlorophylls, carotenoids and specific lipids..

It localises to the plastid. It is found in the chloroplast thylakoid membrane. The enzyme catalyses 2 a plastoquinone + 4 hnu + 2 H2O = 2 a plastoquinol + O2. Photosystem II (PSII) is a light-driven water:plastoquinone oxidoreductase that uses light energy to abstract electrons from H(2)O, generating O(2) and a proton gradient subsequently used for ATP formation. It consists of a core antenna complex that captures photons, and an electron transfer chain that converts photonic excitation into a charge separation. The D1/D2 (PsbA/PsbD) reaction center heterodimer binds P680, the primary electron donor of PSII as well as several subsequent electron acceptors. D2 is needed for assembly of a stable PSII complex. This is Photosystem II D2 protein from Staurastrum punctulatum (Green alga).